A 124-amino-acid chain; its full sequence is Small ribosomal subunit protein uS12 (124 aa).

At aspartate 89 the chain carries 3-methylthioaspartic acid. Positions 103-124 (DTAGVQNRNRGRSKYGAKRPKK) are disordered. Residues 111-124 (NRGRSKYGAKRPKK) show a composition bias toward basic residues.

Belongs to the universal ribosomal protein uS12 family. As to quaternary structure, part of the 30S ribosomal subunit. Contacts proteins S8 and S17. May interact with IF1 in the 30S initiation complex.

Functionally, with S4 and S5 plays an important role in translational accuracy. In terms of biological role, interacts with and stabilizes bases of the 16S rRNA that are involved in tRNA selection in the A site and with the mRNA backbone. Located at the interface of the 30S and 50S subunits, it traverses the body of the 30S subunit contacting proteins on the other side and probably holding the rRNA structure together. The combined cluster of proteins S8, S12 and S17 appears to hold together the shoulder and platform of the 30S subunit. The protein is Small ribosomal subunit protein uS12 of Desulforudis audaxviator (strain MP104C).